The chain runs to 286 residues: Release factor glutamine methyltransferase (286 aa).

Residues 122–126 (GTGTG), D145, W173, and N188 contribute to the S-adenosyl-L-methionine site. Substrate is bound at residue 188-191 (NPPY).

It belongs to the protein N5-glutamine methyltransferase family. PrmC subfamily.

The catalysed reaction is L-glutaminyl-[peptide chain release factor] + S-adenosyl-L-methionine = N(5)-methyl-L-glutaminyl-[peptide chain release factor] + S-adenosyl-L-homocysteine + H(+). Its function is as follows. Methylates the class 1 translation termination release factors RF1/PrfA and RF2/PrfB on the glutamine residue of the universally conserved GGQ motif. This chain is Release factor glutamine methyltransferase, found in Shewanella oneidensis (strain ATCC 700550 / JCM 31522 / CIP 106686 / LMG 19005 / NCIMB 14063 / MR-1).